Consider the following 28-residue polypeptide: LDVELTVEERNLLSVGYKDSTLIMQLLR.

It belongs to the 14-3-3 family.

The sequence is that of 14-3-3-like protein 4 from Pseudotsuga menziesii (Douglas-fir).